Consider the following 275-residue polypeptide: Phosphate import ATP-binding protein PstB (275 aa).

The ABC transporter domain maps to 28–270; the sequence is MSAKNVSVFY…PREERTKDYI (243 aa). 60-67 provides a ligand contact to ATP; the sequence is GPSGCGKS.

This sequence belongs to the ABC transporter superfamily. Phosphate importer (TC 3.A.1.7) family. In terms of assembly, the complex is composed of two ATP-binding proteins (PstB), two transmembrane proteins (PstC and PstA) and a solute-binding protein (PstS).

Its subcellular location is the cell inner membrane. The enzyme catalyses phosphate(out) + ATP + H2O = ADP + 2 phosphate(in) + H(+). In terms of biological role, part of the ABC transporter complex PstSACB involved in phosphate import. Responsible for energy coupling to the transport system. In Novosphingobium aromaticivorans (strain ATCC 700278 / DSM 12444 / CCUG 56034 / CIP 105152 / NBRC 16084 / F199), this protein is Phosphate import ATP-binding protein PstB.